We begin with the raw amino-acid sequence, 314 residues long: tRNA uridine(34) hydroxylase (314 aa).

A Rhodanese domain is found at 140 to 234 (ARDDVILIDT…YLEETPPDES (95 aa)). Cys-194 (cysteine persulfide intermediate) is an active-site residue.

Belongs to the TrhO family.

The catalysed reaction is uridine(34) in tRNA + AH2 + O2 = 5-hydroxyuridine(34) in tRNA + A + H2O. In terms of biological role, catalyzes oxygen-dependent 5-hydroxyuridine (ho5U) modification at position 34 in tRNAs. The protein is tRNA uridine(34) hydroxylase of Acinetobacter baumannii (strain AYE).